Consider the following 98-residue polypeptide: NADH-ubiquinone oxidoreductase chain 4L (98 aa).

3 helical membrane-spanning segments follow: residues 1–21 (MSMMYFNIFMAFTVSLVGLLM), 29–49 (SLLCLEGMMLSLFVMMSVTIL), and 61–81 (IILLVFAACEAALGLSLLVMV).

The protein belongs to the complex I subunit 4L family. As to quaternary structure, core subunit of respiratory chain NADH dehydrogenase (Complex I) which is composed of 45 different subunits.

Its subcellular location is the mitochondrion inner membrane. It carries out the reaction a ubiquinone + NADH + 5 H(+)(in) = a ubiquinol + NAD(+) + 4 H(+)(out). In terms of biological role, core subunit of the mitochondrial membrane respiratory chain NADH dehydrogenase (Complex I) which catalyzes electron transfer from NADH through the respiratory chain, using ubiquinone as an electron acceptor. Part of the enzyme membrane arm which is embedded in the lipid bilayer and involved in proton translocation. The sequence is that of NADH-ubiquinone oxidoreductase chain 4L (MT-ND4L) from Zalophus californianus (California sealion).